The chain runs to 415 residues: Polyketide biosynthesis malonyl-ACP decarboxylase PksF (415 aa).

One can recognise a Ketosynthase family 3 (KS3) domain in the interval 6-407 (LPEVVVTGVG…GMNTAVCIQN (402 aa)).

Belongs to the thiolase-like superfamily. Beta-ketoacyl-ACP synthases family.

It is found in the cytoplasm. The enzyme catalyses malonyl-[ACP] + H(+) = acetyl-[ACP] + CO2. The protein operates within antibiotic biosynthesis; bacillaene biosynthesis. Functionally, involved in some intermediate steps for the synthesis of the antibiotic polyketide bacillaene which is involved in secondary metabolism. It decarboxylates selectively the malonyl group attached on the acyl-carrier-protein AcpK (Mal-AcpK). The protein is Polyketide biosynthesis malonyl-ACP decarboxylase PksF (pksF) of Bacillus subtilis (strain 168).